The following is an 813-amino-acid chain: Receptor-like protein 48 (813 aa).

A signal peptide spans 1-30 (MHSCSERRMMTVIWSLCLIFCLSNSILAIA). The Extracellular segment spans residues 31–786 (KDLCLPDQRD…EDEEKEEKNQ (756 aa)). Asn-69, Asn-105, and Asn-123 each carry an N-linked (GlcNAc...) asparagine glycan. 3 LRR repeats span residues 111–134 (LQHL…SIGN), 136–159 (KYLR…LGSL), and 160–182 (SYLT…SGGN). 2 N-linked (GlcNAc...) asparagine glycosylation sites follow: Asn-195 and Asn-216. LRR repeat units lie at residues 196–219 (LSSV…NMSS), 220–244 (LSKL…LFMI), 245–260 (PSLN…NISS), 261–285 (HSEL…LSKL), 288–310 (LRDL…IFLH), 311–335 (LKSL…FFSH), 336–359 (LMSL…SFPS), 361–381 (TGTL…LENQ), 382–405 (TSLF…LWRL), 406–432 (PTLS…IYSF), 434–450 (ASDN…VCEL), 451–473 (VSLN…CFEN), 475–498 (KTIS…IISE), 500–521 (LTSL…LIKC), 523–544 (DLEF…WLRS), 545–571 (LSNL…SLSF), 572–595 (PKLR…YFAG), 642–666 (FTIY…IGIL), 667–690 (KELI…LSNL), 691–714 (SNLQ…LGKL), and 716–739 (FLEW…QIQS). N-linked (GlcNAc...) asparagine glycosylation is found at Asn-248 and Asn-257. N-linked (GlcNAc...) asparagine glycosylation is present at Asn-380. A glycan (N-linked (GlcNAc...) asparagine) is linked at Asn-484. Asn-673 and Asn-689 each carry an N-linked (GlcNAc...) asparagine glycan. Residues Asn-721 and Asn-741 are each glycosylated (N-linked (GlcNAc...) asparagine). The tract at residues 756-785 (FLNKCGGEEEEEEEATKQEEDEDEEKEEKN) is disordered. The span at 763 to 781 (EEEEEEEATKQEEDEDEEK) shows a compositional bias: acidic residues. A helical transmembrane segment spans residues 787–807 (VFSWIAAAIGYVPGVFCGLTI). At 808 to 813 (AHILTS) the chain is on the cytoplasmic side.

This sequence belongs to the RLP family.

The protein resides in the cell membrane. In terms of biological role, plays a role in root hair development. In Arabidopsis thaliana (Mouse-ear cress), this protein is Receptor-like protein 48.